A 144-amino-acid polypeptide reads, in one-letter code: 3-hydroxyacyl-[acyl-carrier-protein] dehydratase FabZ (144 aa).

Histidine 51 is an active-site residue.

The protein belongs to the thioester dehydratase family. FabZ subfamily.

It localises to the cytoplasm. It carries out the reaction a (3R)-hydroxyacyl-[ACP] = a (2E)-enoyl-[ACP] + H2O. Its function is as follows. Involved in unsaturated fatty acids biosynthesis. Catalyzes the dehydration of short chain beta-hydroxyacyl-ACPs and long chain saturated and unsaturated beta-hydroxyacyl-ACPs. The protein is 3-hydroxyacyl-[acyl-carrier-protein] dehydratase FabZ (fabZ1) of Enterococcus faecalis (strain ATCC 700802 / V583).